The primary structure comprises 185 residues: Adenine phosphoribosyltransferase (185 aa).

The protein belongs to the purine/pyrimidine phosphoribosyltransferase family. Homodimer.

It is found in the cytoplasm. It catalyses the reaction AMP + diphosphate = 5-phospho-alpha-D-ribose 1-diphosphate + adenine. Its pathway is purine metabolism; AMP biosynthesis via salvage pathway; AMP from adenine: step 1/1. In terms of biological role, catalyzes a salvage reaction resulting in the formation of AMP, that is energically less costly than de novo synthesis. The protein is Adenine phosphoribosyltransferase of Shewanella denitrificans (strain OS217 / ATCC BAA-1090 / DSM 15013).